We begin with the raw amino-acid sequence, 254 residues long: Long form salivary protein D7LC (254 aa).

Positions 1-19 (MNAVITSLLFLSLVGLGYS) are cleaved as a signal peptide. 2 disulfide bridges follow: Cys36/Cys66 and Cys62/Cys112. Trp49 provides a ligand contact to thromboxane A2. Trp52 is a binding site for leukotriene C4. Tyr63 is a thromboxane A2 binding site. Residues Gly136 and Lys154 each contribute to the leukotriene C4 site. Lys154 is a binding site for thromboxane A2. Cystine bridges form between Cys162/Cys178, Cys174/Cys221, and Cys211/Cys230.

Belongs to the PBP/GOBP family.

Its subcellular location is the secreted. In terms of biological role, modulates blood feeding of female sandflies on vertebrate species by binding and sequestering different mediators involved in the host response. Binds leukotriene C4, leukotriene D4, leukotriene E4 and U-46619, a stable analog of thromboxane A2. Does not bind histamine or serotonin. Inhibits platelet aggregation induced by low concentrations of collagen in thromboxane A2-dependent manner. The polypeptide is Long form salivary protein D7LC (Phlebotomus papatasi (Sandfly)).